We begin with the raw amino-acid sequence, 88 residues long: Elongation factor 1-beta (88 aa).

The protein belongs to the EF-1-beta/EF-1-delta family.

Promotes the exchange of GDP for GTP in EF-1-alpha/GDP, thus allowing the regeneration of EF-1-alpha/GTP that could then be used to form the ternary complex EF-1-alpha/GTP/AAtRNA. This chain is Elongation factor 1-beta, found in Natronomonas pharaonis (strain ATCC 35678 / DSM 2160 / CIP 103997 / JCM 8858 / NBRC 14720 / NCIMB 2260 / Gabara) (Halobacterium pharaonis).